The following is a 174-amino-acid chain: Co-chaperone protein HscB (174 aa).

A J domain is found at 2 to 74 (DYFTLFGLPA…LKRAEYMLSL (73 aa)).

This sequence belongs to the HscB family. As to quaternary structure, interacts with HscA and stimulates its ATPase activity. Interacts with IscU.

Co-chaperone involved in the maturation of iron-sulfur cluster-containing proteins. Seems to help targeting proteins to be folded toward HscA. This chain is Co-chaperone protein HscB, found in Yersinia pestis bv. Antiqua (strain Antiqua).